The sequence spans 291 residues: Pyridoxal 5'-phosphate synthase subunit PdxS (291 aa).

Aspartate 23 provides a ligand contact to D-ribose 5-phosphate. Catalysis depends on lysine 80, which acts as the Schiff-base intermediate with D-ribose 5-phosphate. A D-ribose 5-phosphate-binding site is contributed by glycine 152. Residue arginine 164 coordinates D-glyceraldehyde 3-phosphate. D-ribose 5-phosphate-binding positions include glycine 213 and 234-235 (GS).

Belongs to the PdxS/SNZ family. In terms of assembly, in the presence of PdxT, forms a dodecamer of heterodimers.

The catalysed reaction is aldehydo-D-ribose 5-phosphate + D-glyceraldehyde 3-phosphate + L-glutamine = pyridoxal 5'-phosphate + L-glutamate + phosphate + 3 H2O + H(+). The protein operates within cofactor biosynthesis; pyridoxal 5'-phosphate biosynthesis. Its function is as follows. Catalyzes the formation of pyridoxal 5'-phosphate from ribose 5-phosphate (RBP), glyceraldehyde 3-phosphate (G3P) and ammonia. The ammonia is provided by the PdxT subunit. Can also use ribulose 5-phosphate and dihydroxyacetone phosphate as substrates, resulting from enzyme-catalyzed isomerization of RBP and G3P, respectively. This chain is Pyridoxal 5'-phosphate synthase subunit PdxS, found in Haemophilus influenzae (strain ATCC 51907 / DSM 11121 / KW20 / Rd).